A 213-amino-acid chain; its full sequence is Thymidylate kinase (213 aa).

10–17 (GLEGAGKT) lines the ATP pocket.

The protein belongs to the thymidylate kinase family.

It catalyses the reaction dTMP + ATP = dTDP + ADP. Phosphorylation of dTMP to form dTDP in both de novo and salvage pathways of dTTP synthesis. This chain is Thymidylate kinase, found in Escherichia fergusonii (strain ATCC 35469 / DSM 13698 / CCUG 18766 / IAM 14443 / JCM 21226 / LMG 7866 / NBRC 102419 / NCTC 12128 / CDC 0568-73).